The chain runs to 159 residues: Ribosomal RNA large subunit methyltransferase H (159 aa).

S-adenosyl-L-methionine contacts are provided by residues L76, G108, and 127–132 (FSKMTF).

This sequence belongs to the RNA methyltransferase RlmH family. In terms of assembly, homodimer.

The protein resides in the cytoplasm. It carries out the reaction pseudouridine(1915) in 23S rRNA + S-adenosyl-L-methionine = N(3)-methylpseudouridine(1915) in 23S rRNA + S-adenosyl-L-homocysteine + H(+). Specifically methylates the pseudouridine at position 1915 (m3Psi1915) in 23S rRNA. This is Ribosomal RNA large subunit methyltransferase H from Clostridium botulinum (strain Alaska E43 / Type E3).